A 510-amino-acid chain; its full sequence is Histidine ammonia-lyase (510 aa).

Positions 144–146 form a cross-link, 5-imidazolinone (Ala-Gly); sequence ASG. Ser145 carries the 2,3-didehydroalanine (Ser) modification.

This sequence belongs to the PAL/histidase family. In terms of processing, contains an active site 4-methylidene-imidazol-5-one (MIO), which is formed autocatalytically by cyclization and dehydration of residues Ala-Ser-Gly.

Its subcellular location is the cytoplasm. The enzyme catalyses L-histidine = trans-urocanate + NH4(+). Its pathway is amino-acid degradation; L-histidine degradation into L-glutamate; N-formimidoyl-L-glutamate from L-histidine: step 1/3. In Chromobacterium violaceum (strain ATCC 12472 / DSM 30191 / JCM 1249 / CCUG 213 / NBRC 12614 / NCIMB 9131 / NCTC 9757 / MK), this protein is Histidine ammonia-lyase.